The primary structure comprises 247 residues: 2,3-bisphosphoglycerate-dependent phosphoglycerate mutase (247 aa).

Substrate-binding positions include 8 to 15 (RHGESTWN), 21 to 22 (TG), Arg-60, 87 to 90 (ERHY), Lys-98, 114 to 115 (RR), and 183 to 184 (GN). His-9 acts as the Tele-phosphohistidine intermediate in catalysis. Glu-87 (proton donor/acceptor) is an active-site residue.

Belongs to the phosphoglycerate mutase family. BPG-dependent PGAM subfamily. In terms of assembly, homodimer.

It carries out the reaction (2R)-2-phosphoglycerate = (2R)-3-phosphoglycerate. The protein operates within carbohydrate degradation; glycolysis; pyruvate from D-glyceraldehyde 3-phosphate: step 3/5. In terms of biological role, catalyzes the interconversion of 2-phosphoglycerate and 3-phosphoglycerate. The sequence is that of 2,3-bisphosphoglycerate-dependent phosphoglycerate mutase from Methylibium petroleiphilum (strain ATCC BAA-1232 / LMG 22953 / PM1).